The following is a 224-amino-acid chain: MPRPGSAQRWAAVAGRWGCRLLALLLLVPGPGGASEITFELPDNAKQCFYEDIAQGTKCTLEFQVITGGHYDVDCRLEDPDGKVLYKEMKKQYDSFTFTASKNGTYKFCFSNEFSTFTHKTVYFDFQVGEDPPLFPSENRVSALTQMESACVSIHEALKSVIDYQTHFRLREAQGRSRAEDLNTRVAYWSVGEALILLVVSIGQVFLLKSFFSDKRTTTTRVGS.

The first 34 residues, methionine 1–alanine 34, serve as a signal peptide directing secretion. At serine 35 to alanine 187 the chain is on the lumenal side. The GOLD domain maps to lysine 46–valine 128. An N-linked (GlcNAc...) asparagine glycan is attached at asparagine 103. A helical transmembrane segment spans residues tyrosine 188–leucine 208. Topologically, residues lysine 209–serine 224 are cytoplasmic. Positions phenylalanine 211 to phenylalanine 212 match the COPII vesicle coat-binding motif. Positions phenylalanine 211–serine 224 match the COPI vesicle coat-binding motif.

The protein belongs to the EMP24/GP25L family. Predominantly monomeric and to lesser extent homodimeric in endoplasmic reticulum, endoplasmic reticulum-Golgi intermediate compartment and cis-Golgi network. Oligomerizes with other members of the EMP24/GP25L family such as TMED2, TMED9 and TMED10. Interacts (via C-terminus) with COPG1; the interaction involves dimeric TMED7. In terms of processing, N-linked glycosylated in complex form containing terminal sialic acid.

The protein localises to the endoplasmic reticulum membrane. Its subcellular location is the golgi apparatus. The protein resides in the cis-Golgi network membrane. It is found in the endoplasmic reticulum-Golgi intermediate compartment membrane. It localises to the cytoplasmic vesicle. The protein localises to the COPI-coated vesicle membrane. Its subcellular location is the COPII-coated vesicle membrane. Functionally, potential role in vesicular protein trafficking, mainly in the early secretory pathway. Appears to play a role in the biosynthesis of secreted cargo including processing and post-translational modifications. This chain is Transmembrane emp24 domain-containing protein 7 (TMED7), found in Homo sapiens (Human).